The chain runs to 139 residues: Iron-sulfur cluster assembly 1 homolog, mitochondrial (139 aa).

Residues Cys-52, Cys-117, and Cys-119 each contribute to the Fe cation site.

This sequence belongs to the HesB/IscA family.

It is found in the mitochondrion. Functionally, involved in the assembly of mitochondrial iron-sulfur proteins. Probably involved in the binding of an intermediate of Fe/S cluster assembly. This Dictyostelium discoideum (Social amoeba) protein is Iron-sulfur cluster assembly 1 homolog, mitochondrial (isca1).